Here is a 160-residue protein sequence, read N- to C-terminus: Protein FrzA (160 aa).

A CheW-like domain is found at 14–155 (EQEFFCFRVG…FSKLLQTARQ (142 aa)).

Necessary for proper aggregation of cells to form fruiting bodies. FRZ genes define a system of signal transduction analogous to the enterobacterial chemotaxis systems. The sequence is that of Protein FrzA (frzA) from Myxococcus xanthus.